A 212-amino-acid chain; its full sequence is ATP-dependent dethiobiotin synthetase BioD (212 aa).

13 to 18 is a binding site for ATP; the sequence is GIGKTV. Threonine 17 contacts Mg(2+). Lysine 33 is an active-site residue. Serine 37 contributes to the substrate binding site. A Mg(2+)-binding site is contributed by glutamate 100. Residues 100 to 103, 160 to 161, and 184 to 186 each bind ATP; these read EGAG, IS, and PLL.

Belongs to the dethiobiotin synthetase family. As to quaternary structure, homodimer. Requires Mg(2+) as cofactor.

The protein resides in the cytoplasm. The catalysed reaction is (7R,8S)-7,8-diammoniononanoate + CO2 + ATP = (4R,5S)-dethiobiotin + ADP + phosphate + 3 H(+). The protein operates within cofactor biosynthesis; biotin biosynthesis; biotin from 7,8-diaminononanoate: step 1/2. Its function is as follows. Catalyzes a mechanistically unusual reaction, the ATP-dependent insertion of CO2 between the N7 and N8 nitrogen atoms of 7,8-diaminopelargonic acid (DAPA, also called 7,8-diammoniononanoate) to form a ureido ring. This is ATP-dependent dethiobiotin synthetase BioD from Brucella abortus (strain S19).